Reading from the N-terminus, the 205-residue chain is Coatomer subunit zeta-2 (205 aa).

Residues 1 to 12 (MQRPEAWPRPHP) are compositionally biased toward basic and acidic residues. A disordered region spans residues 1 to 33 (MQRPEAWPRPHPGEGASAAQAGGAAPPTRATEQ). A compositionally biased stretch (low complexity) spans 13 to 30 (GEGASAAQAGGAAPPTRA).

Belongs to the adaptor complexes small subunit family. Oligomeric complex.

The protein resides in the cytoplasm. It localises to the cytosol. It is found in the endoplasmic reticulum-Golgi intermediate compartment membrane. Its subcellular location is the golgi apparatus membrane. The protein localises to the cytoplasmic vesicle. The protein resides in the COPI-coated vesicle membrane. Functionally, the coatomer is a cytosolic protein complex that binds to dilysine motifs and reversibly associates with Golgi non-clathrin-coated vesicles, which further mediate biosynthetic protein transport from the ER, via the Golgi up to the trans Golgi network. Coatomer complex is required for budding from Golgi membranes, and is essential for the retrograde Golgi-to-ER transport of dilysine-tagged proteins. The zeta subunit may be involved in regulating the coat assembly and, hence, the rate of biosynthetic protein transport due to its association-dissociation properties with the coatomer complex. This chain is Coatomer subunit zeta-2 (Copz2), found in Mus musculus (Mouse).